A 173-amino-acid polypeptide reads, in one-letter code: DNA-directed RNA polymerase subunit delta (173 aa).

Positions 14–81 constitute an HTH HARE-type domain; sequence MALVEIAHEL…SDQTWGLRSW (68 aa). Positions 110-173 are disordered; sequence LDLDEFEEID…DYDDEEEEIK (64 aa).

The protein belongs to the RpoE family. RNAP is composed of a core of 2 alpha, a beta and a beta' subunit. The core is associated with a delta subunit, and at least one of epsilon or omega. When a sigma factor is associated with the core the holoenzyme is formed, which can initiate transcription.

Functionally, participates in both the initiation and recycling phases of transcription. In the presence of the delta subunit, RNAP displays an increased specificity of transcription, a decreased affinity for nucleic acids, and an increased efficiency of RNA synthesis because of enhanced recycling. May function in sigma factor switching. It displaces RNA bound to RNA polymerase in a binary complex. In Bacillus subtilis (strain 168), this protein is DNA-directed RNA polymerase subunit delta.